The following is a 713-amino-acid chain: Cyclomaltodextrin glucanotransferase (713 aa).

The first 27 residues, 1–27 (MKKISKLTTALALSLSLALSLLGPAHA), serve as a signal peptide directing secretion. The tract at residues 28 to 165 (APDTSVSNKQ…NIKVIIDFAP (138 aa)) is A1. The Ca(2+) site is built by Asp-54, Asn-56, Asn-59, and Asn-60. Residues Cys-70 and Cys-77 are joined by a disulfide bond. Ca(2+) is bound by residues Gly-78 and Asp-80. 127-128 (YW) serves as a coordination point for substrate. Asn-166 is a Ca(2+) binding site. The b stretch occupies residues 166 to 229 (NHTSPASLDQ…NLYDLADLNH (64 aa)). His-167 serves as a coordination point for substrate. Residue Ile-217 participates in Ca(2+) binding. 220–223 (NLYD) contributes to the substrate binding site. Asp-226 serves as a coordination point for Ca(2+). An A2 region spans residues 230-433 (NNSTVDTYLK…LRKSNPAIAY (204 aa)). Residue Arg-254 coordinates substrate. The active-site Nucleophile is the Asp-256. 259–260 (KH) is a binding site for substrate. A Ca(2+)-binding site is contributed by His-260. The Proton donor role is filled by Glu-284. Residues His-354, Asp-398, and Arg-402 each coordinate substrate. The interval 434-522 (GTTQERWINN…GTAVWQYTTA (89 aa)) is c. Residues 523-609 (VTAPTIGHVG…SNVHDNFEVL (87 aa)) are d. Residues 526–607 (PTIGHVGPMM…TSSNVHDNFE (82 aa)) form the IPT/TIG domain. The CBM20 domain occupies 608–713 (VLSGDQVSVR…TATINVNWQP (106 aa)). The interval 610 to 713 (SGDQVSVRFV…TATINVNWQP (104 aa)) is e.

The protein belongs to the glycosyl hydrolase 13 family. As to quaternary structure, monomer. Ca(2+) serves as cofactor.

The protein resides in the secreted. The enzyme catalyses Cyclizes part of a (1-&gt;4)-alpha-D-glucan chain by formation of a (1-&gt;4)-alpha-D-glucosidic bond.. The chain is Cyclomaltodextrin glucanotransferase (cgt) from Bacillus sp. (strain 17-1).